A 147-amino-acid polypeptide reads, in one-letter code: Large ribosomal subunit protein bL9 (147 aa).

It belongs to the bacterial ribosomal protein bL9 family.

Functionally, binds to the 23S rRNA. The protein is Large ribosomal subunit protein bL9 of Clostridium acetobutylicum (strain ATCC 824 / DSM 792 / JCM 1419 / IAM 19013 / LMG 5710 / NBRC 13948 / NRRL B-527 / VKM B-1787 / 2291 / W).